Consider the following 269-residue polypeptide: Hydroxyethylthiazole kinase (269 aa).

A substrate-binding site is contributed by Met-42. Arg-118 and Ser-164 together coordinate ATP. Position 191 (Gly-191) interacts with substrate.

Belongs to the Thz kinase family. Mg(2+) serves as cofactor.

The enzyme catalyses 5-(2-hydroxyethyl)-4-methylthiazole + ATP = 4-methyl-5-(2-phosphooxyethyl)-thiazole + ADP + H(+). It functions in the pathway cofactor biosynthesis; thiamine diphosphate biosynthesis; 4-methyl-5-(2-phosphoethyl)-thiazole from 5-(2-hydroxyethyl)-4-methylthiazole: step 1/1. In terms of biological role, catalyzes the phosphorylation of the hydroxyl group of 4-methyl-5-beta-hydroxyethylthiazole (THZ). This chain is Hydroxyethylthiazole kinase, found in Listeria monocytogenes serotype 4b (strain F2365).